A 467-amino-acid chain; its full sequence is MEKLAALKKLPSILRPLLTSKSSYHRVPSDRPTIMDAATSEQLHGLTNRLLTEVNALVSSYSSIDCQHPFLAAACESQNDGSEARSNILSSLSEIEAIVRGPKEFLENIAIQCEMLGSIQWLGEFQILACIPLSQEVPIQDVANLSNVPEQQLAQMIGLTARCGFLIEPRRGYVAHTPLSASFVTNPSHLDAAMFLAEQAAPAALKSATATQRFTESHTNNETAFSLATTTKVPFEAAQEQSPRLSRQWAAYLHHAGGLPEDHVLADAMAKLHWSNISKAGGQVVEVGAFLAAKPLARLFPQLRFLVQLPAGASSCESILCDPSDPIKPGQISIANRVPGSPQSVTNAAVYVLHLPSSVPSQILTELQVHLPALRMSNGVMLIMSGRVLPGQDEPIRARHAAVAHARGLIMYQMSNEVEMDLSSLLQMLDTVRDSTGKLVLVHKLRSCSGMTVAVVVKYQLMAGGAS.

Residues Ile109–Leu179 form the HTH iclR-type domain. The segment at residues Ile139–Gly158 is a DNA-binding region (H-T-H motif).

The protein resides in the nucleus. Functionally, transcriptional coactivator; part of the gene cluster responsible for the typical purple-black color of the ergot sclerotia. The ergochrome gene cluster produces several ergot pigments including the yellow ergochrome secalonic acid and its derivatives, as well as the red anthraquinones endocrocin and clavorubin. With CPUR_05433, coregulates the production of geodin. The protein is Ergochrome gene cluster transcriptional coactivator CPUR_05432 of Claviceps purpurea (strain 20.1) (Ergot fungus).